Here is a 485-residue protein sequence, read N- to C-terminus: MRLAGILLHVTSLPSPYGIGDLGKEAYRFLDFLKECGFSLWQVLPLNPTSLEAGNSPYSSNSLFAGNYVLIDPEELLEEDLIKERDLKRFPLGEALYEVVYEYKKELLEKAFKNFRRFELLEDFLKEHSYWLRDYALYMAIKEEEGKEWYEWDEELKRREKEALKRVLNKLKGRFYFHVFVQFVFFKQWEKLRRYARERGISIVGDLPMYPSYSSADVWTNPELFKLDGDLKPLFVAGVPPDFFSKTGQLWGNPVYNWEEHEKEGFRWWIRRVHHNLKLFDFLRLDHFRGFEAYWEVPYGEETAVNGRWVKAPGKTLFKKLLSYFPKNPFIAEDLGFITDEVRYLRETFKIPGSRVIEFAFYDKESEHLPHNVEENNVYYTSTHDLPPIRGWFENLGEESRKRLFEYLGREIKEEKVNEELIRLVLISRAKFAIIQMQDLLNLGNEARMNYPGRPFGNWRWRIKEDYTQKKEFIKKLLGIYGREV.

Belongs to the disproportionating enzyme family.

Its subcellular location is the cytoplasm. The enzyme catalyses Transfers a segment of a (1-&gt;4)-alpha-D-glucan to a new position in an acceptor, which may be glucose or a (1-&gt;4)-alpha-D-glucan.. The chain is 4-alpha-glucanotransferase (malQ) from Aquifex aeolicus (strain VF5).